The primary structure comprises 524 residues: Strychnine-10-hydroxylase (524 aa).

Residues 6–26 traverse the membrane as a helical segment; sequence LYIHTAILGLISLFLILHFVF. Cysteine 466 provides a ligand contact to heme.

This sequence belongs to the cytochrome P450 family. It depends on heme as a cofactor.

Its subcellular location is the membrane. It catalyses the reaction strychnine + reduced [NADPH--hemoprotein reductase] + O2 = 10-hydroxystrychnine + oxidized [NADPH--hemoprotein reductase] + H2O + H(+). It functions in the pathway alkaloid biosynthesis. Its function is as follows. Monooxygenase involved in the biosynthesis of curare monoterpene indole alkaloids (MIAs), natural products such as strychnine, a neurotoxic compound used as a pesticide to control rodents, and its pharmacologically active derivatives, including brucine, used to regulate blood pressure. Curare alkaloids act as animal glycine receptor antagonists. Catalyzes the conversion of strychnine to 10-OH strychnine. The polypeptide is Strychnine-10-hydroxylase (Strychnos nux-vomica (Poison nut)).